The chain runs to 228 residues: NAD(P)H-hydrate epimerase (228 aa).

The region spanning 9–209 (VRAVERLAHR…LLGLTPAFLA (201 aa)) is the YjeF N-terminal domain. (6S)-NADPHX is bound at residue 53–57 (NNGGD). Residues asparagine 54 and aspartate 115 each contribute to the K(+) site. (6S)-NADPHX-binding positions include 119-125 (GIGLARP) and aspartate 148. Serine 151 provides a ligand contact to K(+).

Belongs to the NnrE/AIBP family. Requires K(+) as cofactor.

The enzyme catalyses (6R)-NADHX = (6S)-NADHX. It catalyses the reaction (6R)-NADPHX = (6S)-NADPHX. Functionally, catalyzes the epimerization of the S- and R-forms of NAD(P)HX, a damaged form of NAD(P)H that is a result of enzymatic or heat-dependent hydration. This is a prerequisite for the S-specific NAD(P)H-hydrate dehydratase to allow the repair of both epimers of NAD(P)HX. This chain is NAD(P)H-hydrate epimerase, found in Bordetella bronchiseptica (strain ATCC BAA-588 / NCTC 13252 / RB50) (Alcaligenes bronchisepticus).